Reading from the N-terminus, the 208-residue chain is Ubiquinone biosynthesis protein COQ4 homolog, mitochondrial (208 aa).

Residues His-105, Asp-106, His-109, and Glu-122 each contribute to the Zn(2+) site.

This sequence belongs to the COQ4 family. In terms of assembly, component of a multi-subunit COQ enzyme complex. The cofactor is Zn(2+).

Its subcellular location is the mitochondrion inner membrane. The enzyme catalyses a 4-hydroxy-3-methoxy-5-(all-trans-polyprenyl)benzoate + H(+) = a 2-methoxy-6-(all-trans-polyprenyl)phenol + CO2. It functions in the pathway cofactor biosynthesis; ubiquinone biosynthesis. In terms of biological role, lyase that catalyzes the C1-decarboxylation of 4-hydroxy-3-methoxy-5-(all-trans-polyprenyl)benzoic acid into 2-methoxy-6-(all-trans-polyprenyl)phenol during ubiquinone biosynthesis. The sequence is that of Ubiquinone biosynthesis protein COQ4 homolog, mitochondrial from Nematostella vectensis (Starlet sea anemone).